The primary structure comprises 103 residues: Large ribosomal subunit protein uL24 (103 aa).

The protein belongs to the universal ribosomal protein uL24 family. Part of the 50S ribosomal subunit.

Its function is as follows. One of two assembly initiator proteins, it binds directly to the 5'-end of the 23S rRNA, where it nucleates assembly of the 50S subunit. Functionally, one of the proteins that surrounds the polypeptide exit tunnel on the outside of the subunit. This chain is Large ribosomal subunit protein uL24, found in Syntrophomonas wolfei subsp. wolfei (strain DSM 2245B / Goettingen).